A 924-amino-acid polypeptide reads, in one-letter code: Hexokinase-3 (924 aa).

The tract at residues 1-27 is disordered; it reads MAAIEPSGLHPGERDSSCPQEGIPRPS. Hexokinase domains are found at residues 27 to 471 and 477 to 913; these read SGSL…MVTA and ATHR…LVTR. The tract at residues 84-220 is hexokinase small subdomain 1; the sequence is HGTEQGDFLV…TYNIDVVAMV (137 aa). 95-102 lines the ATP pocket; that stretch reads ELGATGAS. Position 95-104 (95-104) interacts with D-glucose 6-phosphate; the sequence is ELGATGASLR. D-glucose is bound by residues S168, 185 to 186, and 221 to 222; these read TK and ND. The segment at 221 to 460 is hexokinase large subdomain 1; sequence NDTVGTMMGC…CDVSFIPSVD (240 aa). D-glucose 6-phosphate is bound by residues D222 and T245. Residues N248, E273, and 304–307 each bind D-glucose; that span reads QRFE. Residue 426–428 participates in D-glucose 6-phosphate binding; that stretch reads GGR. ATP is bound by residues 438–439 and 542–547; these read CI and DLGGTN. Residues 531 to 662 form a hexokinase small subdomain 2 region; that stretch reads DGSERGDFLA…AVELNVVAIV (132 aa). Residue 542-546 participates in D-glucose 6-phosphate binding; it reads DLGGT. Residues 610–611, 627–628, and 663–664 each bind D-glucose; these read SF, TK, and ND. A hexokinase large subdomain 2 region spans residues 663-902; it reads NDTVGTMMSC…CTVTFLQSED (240 aa). D-glucose 6-phosphate contacts are provided by D664 and T687. T687 provides a ligand contact to ATP. D-glucose-binding positions include 689–690, E715, and E749; that span reads TN. ATP is bound by residues 754-755, 791-795, and 870-874; these read GM, TKFLS, and TLYKL. D-glucose 6-phosphate contacts are provided by residues 868–870 and S904; that span reads DGT.

The protein belongs to the hexokinase family.

It catalyses the reaction a D-hexose + ATP = a D-hexose 6-phosphate + ADP + H(+). The catalysed reaction is D-fructose + ATP = D-fructose 6-phosphate + ADP + H(+). The enzyme catalyses D-glucose + ATP = D-glucose 6-phosphate + ADP + H(+). Its pathway is carbohydrate metabolism; hexose metabolism. It functions in the pathway carbohydrate degradation; glycolysis; D-glyceraldehyde 3-phosphate and glycerone phosphate from D-glucose: step 1/4. With respect to regulation, hexokinase is an allosteric enzyme inhibited by its product D-glucose 6-phosphate. Catalyzes the phosphorylation of hexose, such as D-glucose and D-fructose, to hexose 6-phosphate (D-glucose 6-phosphate and D-fructose 6-phosphate, respectively). Mediates the initial step of glycolysis by catalyzing phosphorylation of D-glucose to D-glucose 6-phosphate. The chain is Hexokinase-3 from Rattus norvegicus (Rat).